The sequence spans 177 residues: MYLTRKSIMLLRKYLLVTESQVSKCGFHIVKKKGDVLYPKRTKYSKGRCSRGCKPDGTKLGFGRYGTKSCRAGRLSYRAIEAARRATIGHSFRRAMSGQFRRNCKIWVRVLADLPITGKPAEVRMGRGKGNPTGWIARVSTGQIPFEMDGVSLANARQAARLAAHKPCSSTKFVQWS.

It belongs to the universal ribosomal protein uL16 family.

Its subcellular location is the mitochondrion. The polypeptide is Large ribosomal subunit protein uL16m (RPL16) (Brassica napus (Rape)).